Reading from the N-terminus, the 581-residue chain is Prolactin receptor (581 aa).

The first 24 residues, M1–G24, serve as a signal peptide directing secretion. The Extracellular segment spans residues Q25–M237. 2 consecutive Fibronectin type-III domains span residues P27–P127 and P129–D229. C36 and C46 are joined by a disulfide. N59 carries N-linked (GlcNAc...) asparagine glycosylation. Cysteines 75 and 86 form a disulfide. Residue N132 is glycosylated (N-linked (GlcNAc...) asparagine). Residues D211 and H212 each contribute to the Zn(2+) site. Residues W215–S219 carry the WSXWS motif motif. A helical transmembrane segment spans residues W238–L258. The Cytoplasmic segment spans residues K259–P581. The Box 1 motif motif lies at I267–K275. Disordered stretches follow at residues Q324–E384 and D458–Q499. Basic and acidic residues-rich tracts occupy residues P329–S349, H375–E384, and E469–E483.

The protein belongs to the type I cytokine receptor family. Type 1 subfamily. In terms of assembly, interacts with SMARCA1. Interacts with NEK3 and VAV2 and this interaction is prolactin-dependent. Expressed in all tissues examined; liver, peripheral blood lymphocytes, endometrium, corpus luteum, intestine, fetal thymus, fetal spleen, fetal liver and fetal brain.

The protein resides in the membrane. Functionally, this is a receptor for the anterior pituitary hormone prolactin. This chain is Prolactin receptor (PRLR), found in Bos taurus (Bovine).